A 271-amino-acid polypeptide reads, in one-letter code: ATP-dependent Clp protease proteolytic subunit 6, chloroplastic (271 aa).

The interval 1 to 30 (MAGLAISPPLGLSFSSRTRNPKPTSFLSHN) is disordered. Residues 1–77 (MAGLAISPPL…KAPRFGVIEA (77 aa)) constitute a chloroplast transit peptide. The segment covering 13-30 (SFSSRTRNPKPTSFLSHN) has biased composition (polar residues). Ser175 functions as the Nucleophile in the catalytic mechanism. Residue His200 is part of the active site.

It belongs to the peptidase S14 family. Component of the chloroplastic Clp protease core complex which consist of at least 16 proteins: CLPP4 (3 copies), CLPP5 (3 copies), CLPR4 (2 copies), ClpP1 (1 copy), CLPP6 (1 copy), CLPR2 (1 copy), CLPT1 (1 copy), CLPT2 (1 copy) and 3 copies of CLPP3 and/or CLPR1 and/or CLPR3. The core complex is organized in two heptameric rings, one containing CLPP3,4,5,6 in a 1:2:3:1 ratio and the other CLPP1 and CLPR1,2,3,4 in a 3:1:1:1:1 ratio. Mostly expressed in leaves. Also detected in stems, and to a lower extent, in roots (at protein level).

The protein resides in the plastid. Its subcellular location is the chloroplast stroma. It carries out the reaction Hydrolysis of proteins to small peptides in the presence of ATP and magnesium. alpha-casein is the usual test substrate. In the absence of ATP, only oligopeptides shorter than five residues are hydrolyzed (such as succinyl-Leu-Tyr-|-NHMec, and Leu-Tyr-Leu-|-Tyr-Trp, in which cleavage of the -Tyr-|-Leu- and -Tyr-|-Trp bonds also occurs).. Functionally, cleaves peptides in various proteins in a process that requires ATP hydrolysis. Has a chymotrypsin-like activity. Plays a major role in the degradation of misfolded proteins. Essential protein required for chloroplast development and integrity. This chain is ATP-dependent Clp protease proteolytic subunit 6, chloroplastic, found in Arabidopsis thaliana (Mouse-ear cress).